A 255-amino-acid chain; its full sequence is F-box/SPRY domain-containing protein 1 (255 aa).

In terms of domain architecture, F-box spans 3–51 (DPVAALCNYNVLEVIFSYLELDDLSHCSQVCKSWNLFLNDENSDVWRWH). Residues 61-253 (LKSDLLSSVS…VSMVYLGTPM (193 aa)) form the B30.2/SPRY domain.

Belongs to the FBXO45/Fsn family. In terms of assembly, component of an E3 ubiquitin ligase complex composed of hiw and Fsn.

The protein localises to the synapse. It participates in protein modification; protein ubiquitination. Functionally, required in the presynaptic motoneuron to down-regulate the levels of wnd and restrain synaptic terminal growth at the neuromuscular junction (NMJ). This chain is F-box/SPRY domain-containing protein 1, found in Drosophila ananassae (Fruit fly).